Reading from the N-terminus, the 315-residue chain is Mitochondrial glutamate carrier 2 (315 aa).

3 Solcar repeats span residues 6–92 (LSIT…FRRL), 100–210 (RNLK…LNNL), and 219–308 (ASFA…GIGE). 3 helical membrane-spanning segments follow: residues 12-32 (LING…IDLA), 61-81 (FFGM…EKAI), and 106-126 (MLAG…MEML). The tract at residues 141–160 (QGSASAPSTSRSYTTGSAST) is disordered. Polar residues predominate over residues 142-159 (GSASAPSTSRSYTTGSAS). Phosphoserine is present on Ser145. 3 helical membrane passes run 185-205 (GLGA…PLFA), 225-245 (FVSG…LDVL), and 288-308 (ALVI…GIGE).

It belongs to the mitochondrial carrier (TC 2.A.29) family. Expressed in brain, to a lesser extent in testis, and poorly in all the other tissues.

It is found in the mitochondrion inner membrane. It catalyses the reaction L-glutamate(in) + H(+)(in) = L-glutamate(out) + H(+)(out). Responsible for the transport of glutamate from the cytosol into the mitochondrial matrix with the concomitant import of a proton (symport system). The sequence is that of Mitochondrial glutamate carrier 2 from Homo sapiens (Human).